The primary structure comprises 137 residues: Golgin subfamily A member 7 (137 aa).

S-palmitoyl cysteine attachment occurs at residues Cys-69 and Cys-72.

Belongs to the ERF4 family. As to quaternary structure, interacts with GOLGA3. Interacts with ZDHHC9. Palmitoylated on Cys-69 and Cys-72; which is required for Golgi localization and interaction with GOLGA3.

The protein resides in the golgi apparatus membrane. Its function is as follows. May be involved in protein transport from Golgi to cell surface. The ZDHHC9-GOLGA7 complex is a palmitoyltransferase specific for HRAS and NRAS. The polypeptide is Golgin subfamily A member 7 (Golga7) (Rattus norvegicus (Rat)).